A 217-amino-acid polypeptide reads, in one-letter code: Translation initiation factor IF-3 (217 aa).

The tract at residues 170–217 is disordered; the sequence is KKTEAMAEARQAQEARKADAKANPGKSQNAAETDDAEAEAPAEAPAEA. Residues 172 to 189 are compositionally biased toward basic and acidic residues; sequence TEAMAEARQAQEARKADA.

This sequence belongs to the IF-3 family. In terms of assembly, monomer.

Its subcellular location is the cytoplasm. Its function is as follows. IF-3 binds to the 30S ribosomal subunit and shifts the equilibrium between 70S ribosomes and their 50S and 30S subunits in favor of the free subunits, thus enhancing the availability of 30S subunits on which protein synthesis initiation begins. This is Translation initiation factor IF-3 from Streptomyces coelicolor (strain ATCC BAA-471 / A3(2) / M145).